The following is a 414-amino-acid chain: Gamma-glutamyl phosphate reductase (414 aa).

Belongs to the gamma-glutamyl phosphate reductase family.

The protein resides in the cytoplasm. It catalyses the reaction L-glutamate 5-semialdehyde + phosphate + NADP(+) = L-glutamyl 5-phosphate + NADPH + H(+). The protein operates within amino-acid biosynthesis; L-proline biosynthesis; L-glutamate 5-semialdehyde from L-glutamate: step 2/2. Catalyzes the NADPH-dependent reduction of L-glutamate 5-phosphate into L-glutamate 5-semialdehyde and phosphate. The product spontaneously undergoes cyclization to form 1-pyrroline-5-carboxylate. The chain is Gamma-glutamyl phosphate reductase from Xanthomonas campestris pv. campestris (strain B100).